The following is a 138-amino-acid chain: DNA-directed RNA polymerase subunit omega (138 aa).

The disordered stretch occupies residues 101 to 138 (AEDDDTLEADGLTIHDGADSDLDLSDDAGQDTDEADED). Residues 119–138 (DSDLDLSDDAGQDTDEADED) show a composition bias toward acidic residues.

The protein belongs to the RNA polymerase subunit omega family. The RNAP catalytic core consists of 2 alpha, 1 beta, 1 beta' and 1 omega subunit. When a sigma factor is associated with the core the holoenzyme is formed, which can initiate transcription.

The enzyme catalyses RNA(n) + a ribonucleoside 5'-triphosphate = RNA(n+1) + diphosphate. Its function is as follows. Promotes RNA polymerase assembly. Latches the N- and C-terminal regions of the beta' subunit thereby facilitating its interaction with the beta and alpha subunits. The sequence is that of DNA-directed RNA polymerase subunit omega from Rhodospirillum rubrum (strain ATCC 11170 / ATH 1.1.1 / DSM 467 / LMG 4362 / NCIMB 8255 / S1).